The sequence spans 651 residues: Mitogen-activated protein kinase kinase kinase 3 (651 aa).

One can recognise a Protein kinase domain in the interval 68–330 (WRKGELIGCG…ATELLQHPFV (263 aa)). Residues 74 to 82 (IGCGAFGRV) and Lys-97 each bind ATP. Residues 105-130 (SASKEKTQGHIRELEEEVQLLKNLSH) adopt a coiled-coil conformation. Glycyl lysine isopeptide (Lys-Gly) (interchain with G-Cter in ubiquitin) cross-links involve residues Lys-108 and Lys-110. Catalysis depends on Asp-196, which acts as the Proton acceptor. A disordered region spans residues 573–608 (MPSPLKSSKRTLNTSRVMQSGTEPTQVNESTKKGVN). Residues 582–608 (RTLNTSRVMQSGTEPTQVNESTKKGVN) are compositionally biased toward polar residues. A coiled-coil region spans residues 618 to 641 (RKWEEELYEELERHRENLRHAGAG).

Belongs to the protein kinase superfamily. STE Ser/Thr protein kinase family. MAP kinase kinase kinase subfamily. As to quaternary structure, interacts with NACK2 and MKK6. Expressed in roots and flowers.

Its subcellular location is the cytoplasm. The protein localises to the cytoskeleton. The enzyme catalyses L-seryl-[protein] + ATP = O-phospho-L-seryl-[protein] + ADP + H(+). It carries out the reaction L-threonyl-[protein] + ATP = O-phospho-L-threonyl-[protein] + ADP + H(+). Functionally, involved in cortical microtubules organization and stabilization by regulating the phosphorylation state of microtubule-associated proteins such as MAP65-1. The sequence is that of Mitogen-activated protein kinase kinase kinase 3 (ANP3) from Arabidopsis thaliana (Mouse-ear cress).